The primary structure comprises 141 residues: Nucleoside triphosphatase NudI (141 aa).

Residues 1 to 141 (MRQRTIVCPL…RHTLALKGLL (141 aa)) enclose the Nudix hydrolase domain. The Nudix box signature appears at 38–59 (GGVEPGERIEEALRREIREELG).

It belongs to the Nudix hydrolase family. NudI subfamily. Monomer. Mg(2+) serves as cofactor.

The enzyme catalyses a ribonucleoside 5'-triphosphate + H2O = a ribonucleoside 5'-phosphate + diphosphate + H(+). The catalysed reaction is a 2'-deoxyribonucleoside 5'-triphosphate + H2O = a 2'-deoxyribonucleoside 5'-phosphate + diphosphate + H(+). It carries out the reaction dUTP + H2O = dUMP + diphosphate + H(+). It catalyses the reaction dTTP + H2O = dTMP + diphosphate + H(+). The enzyme catalyses dCTP + H2O = dCMP + diphosphate + H(+). Its function is as follows. Catalyzes the hydrolysis of nucleoside triphosphates, with a preference for pyrimidine deoxynucleoside triphosphates (dUTP, dTTP and dCTP). In Salmonella paratyphi B (strain ATCC BAA-1250 / SPB7), this protein is Nucleoside triphosphatase NudI.